A 361-amino-acid polypeptide reads, in one-letter code: Peptide chain release factor 1 (361 aa).

Gln-235 carries the post-translational modification N5-methylglutamine.

It belongs to the prokaryotic/mitochondrial release factor family. In terms of processing, methylated by PrmC. Methylation increases the termination efficiency of RF1.

The protein localises to the cytoplasm. Functionally, peptide chain release factor 1 directs the termination of translation in response to the peptide chain termination codons UAG and UAA. The polypeptide is Peptide chain release factor 1 (Buchnera aphidicola subsp. Acyrthosiphon pisum (strain 5A)).